The chain runs to 156 residues: Ribosomal RNA large subunit methyltransferase H (156 aa).

S-adenosyl-L-methionine-binding positions include Leu-73, Gly-104, and 123–128; that span reads LSALTL.

It belongs to the RNA methyltransferase RlmH family. Homodimer.

It localises to the cytoplasm. It catalyses the reaction pseudouridine(1915) in 23S rRNA + S-adenosyl-L-methionine = N(3)-methylpseudouridine(1915) in 23S rRNA + S-adenosyl-L-homocysteine + H(+). Specifically methylates the pseudouridine at position 1915 (m3Psi1915) in 23S rRNA. The sequence is that of Ribosomal RNA large subunit methyltransferase H from Shewanella denitrificans (strain OS217 / ATCC BAA-1090 / DSM 15013).